Consider the following 219-residue polypeptide: N-(5'-phosphoribosyl)anthranilate isomerase (219 aa).

Belongs to the TrpF family.

The catalysed reaction is N-(5-phospho-beta-D-ribosyl)anthranilate = 1-(2-carboxyphenylamino)-1-deoxy-D-ribulose 5-phosphate. It functions in the pathway amino-acid biosynthesis; L-tryptophan biosynthesis; L-tryptophan from chorismate: step 3/5. The sequence is that of N-(5'-phosphoribosyl)anthranilate isomerase from Mesorhizobium japonicum (strain LMG 29417 / CECT 9101 / MAFF 303099) (Mesorhizobium loti (strain MAFF 303099)).